A 297-amino-acid chain; its full sequence is Glycine--tRNA ligase alpha subunit (297 aa).

Belongs to the class-II aminoacyl-tRNA synthetase family. In terms of assembly, tetramer of two alpha and two beta subunits.

It localises to the cytoplasm. The enzyme catalyses tRNA(Gly) + glycine + ATP = glycyl-tRNA(Gly) + AMP + diphosphate. This is Glycine--tRNA ligase alpha subunit from Sulfurihydrogenibium sp. (strain YO3AOP1).